The following is a 526-amino-acid chain: Amine oxidase [flavin-containing] A (526 aa).

An N-acetylmethionine modification is found at Met-1. Topologically, residues Met-1–Ser-497 are cytoplasmic. At Ser-383 the chain carries Phosphoserine. The residue at position 406 (Cys-406) is an S-8alpha-FAD cysteine. A helical; Anchor for type IV membrane protein transmembrane segment spans residues Val-498–Leu-518. Over Tyr-519–Ser-526 the chain is Mitochondrial intermembrane. The interval Lys-520 to Lys-522 is interaction with membrane phospholipid headgroups.

Belongs to the flavin monoamine oxidase family. Monomer, homo- or heterodimer (containing two subunits of similar size). Each subunit contains a covalently bound flavin. Enzymatically active as monomer. FAD serves as cofactor.

Its subcellular location is the mitochondrion outer membrane. The catalysed reaction is a secondary aliphatic amine + O2 + H2O = a primary amine + an aldehyde + H2O2. The enzyme catalyses a primary methyl amine + O2 + H2O = an aldehyde + H2O2 + NH4(+). It catalyses the reaction serotonin + O2 + H2O = (5-hydroxyindol-3-yl)acetaldehyde + H2O2 + NH4(+). It carries out the reaction (R)-adrenaline + O2 + H2O = (R)-3,4-dihydroxymandelaldehyde + methylamine + H2O2. The catalysed reaction is dopamine + O2 + H2O = 3,4-dihydroxyphenylacetaldehyde + H2O2 + NH4(+). The enzyme catalyses tyramine + O2 + H2O = (4-hydroxyphenyl)acetaldehyde + H2O2 + NH4(+). It catalyses the reaction (R)-noradrenaline + O2 + H2O = (R)-3,4-dihydroxymandelaldehyde + H2O2 + NH4(+). It carries out the reaction kynuramine + O2 + H2O = 3-(2-aminophenyl)-3-oxopropanal + H2O2 + NH4(+). The catalysed reaction is tryptamine + O2 + H2O = indole-3-acetaldehyde + H2O2 + NH4(+). The enzyme catalyses 2-phenylethylamine + O2 + H2O = 2-phenylacetaldehyde + H2O2 + NH4(+). In terms of biological role, catalyzes the oxidative deamination of biogenic and xenobiotic amines and has important functions in the metabolism of neuroactive and vasoactive amines in the central nervous system and peripheral tissues. Preferentially oxidizes serotonin. Also catalyzes the oxidative deamination of kynuramine to 3-(2-aminophenyl)-3-oxopropanal that can spontaneously condense to 4-hydroxyquinoline. This chain is Amine oxidase [flavin-containing] A, found in Mus musculus (Mouse).